The primary structure comprises 188 residues: MIVILDNGGQYVHRIHRSLKYIGVSSKIVPNTTPLEEIESNKEVKGIILSGGPDIEKAKNCIDIALNAKLPILGICLGHQLIALAYGGEVGRAEAEEYALTKVYVDKENDLFKNVPREFNAWASHKDEVKKVPEGFEILAHSDICQVEAMKHKTKPIYGVQFHPEVAHTEYGNEILKNFCKVCGYKFE.

The Glutamine amidotransferase type-1 domain maps to 1-188 (MIVILDNGGQ…FCKVCGYKFE (188 aa)). The Nucleophile role is filled by cysteine 76. Active-site residues include histidine 163 and glutamate 165.

As to quaternary structure, heterodimer composed of a glutamine amidotransferase subunit (A) and a GMP-binding subunit (B).

It carries out the reaction XMP + L-glutamine + ATP + H2O = GMP + L-glutamate + AMP + diphosphate + 2 H(+). It participates in purine metabolism; GMP biosynthesis; GMP from XMP (L-Gln route): step 1/1. In terms of biological role, catalyzes the synthesis of GMP from XMP. This is GMP synthase [glutamine-hydrolyzing] subunit A from Methanocaldococcus jannaschii (strain ATCC 43067 / DSM 2661 / JAL-1 / JCM 10045 / NBRC 100440) (Methanococcus jannaschii).